We begin with the raw amino-acid sequence, 733 residues long: Probable Rho-GTPase-activating protein 6 (733 aa).

The segment covering 116-125 has biased composition (polar residues); the sequence is VFNESKSSSP. Residues 116–135 form a disordered region; it reads VFNESKSSSPPDAHTDKYFT. Residue Thr-141 is modified to Phosphothreonine. The tract at residues 174–256 is disordered; the sequence is RFDKPSNNGP…SKGSWSSILR (83 aa). Over residues 179–195 the composition is skewed to low complexity; it reads SNNGPLGRSSLNLSSLS. 2 stretches are compositionally biased toward polar residues: residues 196 to 218 and 225 to 240; these read HELQTSQDSPSLSATNQLSSSDT and PPSSFGSQRQFNASQD. The 235-residue stretch at 312-546 folds into the Rho-GAP domain; it reads TNLCKFTFPT…GLIIHWPEVL (235 aa). The interval 692–713 is disordered; that stretch reads PVTVTASSETNKKSQKINKKAS. A compositionally biased stretch (basic residues) spans 704 to 713; sequence KSQKINKKAS.

The polypeptide is Probable Rho-GTPase-activating protein 6 (rga6) (Schizosaccharomyces pombe (strain 972 / ATCC 24843) (Fission yeast)).